The following is a 434-amino-acid chain: Ribosomal protein uS12 methylthiotransferase RimO (434 aa).

The MTTase N-terminal domain occupies 2-112 (AKIGFVSLGC…VLEAVQEVLP (111 aa)). 6 residues coordinate [4Fe-4S] cluster: Cys-11, Cys-47, Cys-76, Cys-142, Cys-146, and Cys-149. The Radical SAM core domain maps to 128-365 (LTPRHYAYVK…LEVQARVSLR (238 aa)). The TRAM domain maps to 368 to 434 (QRFVGKTLEV…DTYDLHGVQA (67 aa)).

This sequence belongs to the methylthiotransferase family. RimO subfamily. Requires [4Fe-4S] cluster as cofactor.

The protein localises to the cytoplasm. The enzyme catalyses L-aspartate(89)-[ribosomal protein uS12]-hydrogen + (sulfur carrier)-SH + AH2 + 2 S-adenosyl-L-methionine = 3-methylsulfanyl-L-aspartate(89)-[ribosomal protein uS12]-hydrogen + (sulfur carrier)-H + 5'-deoxyadenosine + L-methionine + A + S-adenosyl-L-homocysteine + 2 H(+). Catalyzes the methylthiolation of an aspartic acid residue of ribosomal protein uS12. This chain is Ribosomal protein uS12 methylthiotransferase RimO, found in Thermus thermophilus (strain ATCC BAA-163 / DSM 7039 / HB27).